The chain runs to 183 residues: MVMNTDSLALIKNSIKTIPNYPKEGILFRDVTSLLEDPQAYKLTIGLLVEHYKDQGFTKVVGTEARGFLFGAPLALELGIGFVPVRKPGKLPRETISESYELEYGHDVLEIHVDAINADDKVLVIDDLLATGGTIEATVKLIRKLGGSVNDAAFVISLPDLGGEERLKAMDLKLISLCEFEGE.

It belongs to the purine/pyrimidine phosphoribosyltransferase family. As to quaternary structure, homodimer.

It is found in the cytoplasm. It carries out the reaction AMP + diphosphate = 5-phospho-alpha-D-ribose 1-diphosphate + adenine. The protein operates within purine metabolism; AMP biosynthesis via salvage pathway; AMP from adenine: step 1/1. Catalyzes a salvage reaction resulting in the formation of AMP, that is energically less costly than de novo synthesis. The chain is Adenine phosphoribosyltransferase from Shewanella pealeana (strain ATCC 700345 / ANG-SQ1).